The sequence spans 155 residues: Basic phospholipase A2 PC9 (155 aa).

Positions 1–21 (MYPAHLLVLLAVCVSLLGASA) are cleaved as a signal peptide. Positions 22-27 (ISPRPL) are excised as a propeptide. 7 cysteine pairs are disulfide-bonded: Cys-38–Cys-98, Cys-54–Cys-144, Cys-56–Cys-72, Cys-71–Cys-125, Cys-78–Cys-118, Cys-87–Cys-111, and Cys-105–Cys-116. Ca(2+)-binding residues include Tyr-55, Gly-57, and Gly-59. Residue His-75 is part of the active site. Asp-76 provides a ligand contact to Ca(2+). Residue Asp-119 is part of the active site.

Belongs to the phospholipase A2 family. Group I subfamily. D49 sub-subfamily. The cofactor is Ca(2+). As to expression, expressed by the venom gland.

It localises to the secreted. The enzyme catalyses a 1,2-diacyl-sn-glycero-3-phosphocholine + H2O = a 1-acyl-sn-glycero-3-phosphocholine + a fatty acid + H(+). In terms of biological role, snake venom phospholipase A2 (PLA2) that inhibits neuromuscular transmission by blocking acetylcholine release from the nerve termini. PLA2 catalyzes the calcium-dependent hydrolysis of the 2-acyl groups in 3-sn-phosphoglycerides. In Laticauda colubrina (Yellow-lipped sea krait), this protein is Basic phospholipase A2 PC9.